Here is a 585-residue protein sequence, read N- to C-terminus: Arginine--tRNA ligase (585 aa).

The 'HIGH' region signature appears at 130 to 140 (ANPTGPMHVGH).

The protein belongs to the class-I aminoacyl-tRNA synthetase family. As to quaternary structure, monomer.

The protein resides in the cytoplasm. The catalysed reaction is tRNA(Arg) + L-arginine + ATP = L-arginyl-tRNA(Arg) + AMP + diphosphate. In Methylorubrum extorquens (strain PA1) (Methylobacterium extorquens), this protein is Arginine--tRNA ligase.